Reading from the N-terminus, the 352-residue chain is C-X-C chemokine receptor type 4 (352 aa).

The interval 1-21 (MEGISIYTSDNYTEEIGSGDY) is important for chemokine binding and signaling. Residues 1 to 38 (MEGISIYTSDNYTEEIGSGDYDSIKEPCFREENAHFNR) are Extracellular-facing. Sulfotyrosine is present on tyrosine 7. The N-linked (GlcNAc...) asparagine glycan is linked to asparagine 11. Tyrosine 12 carries the post-translational modification Sulfotyrosine. The O-linked (Xyl...) (chondroitin sulfate) serine glycan is linked to serine 18. A Sulfotyrosine modification is found at tyrosine 21. 2 disulfides stabilise this stretch: cysteine 28/cysteine 274 and cysteine 109/cysteine 186. A helical membrane pass occupies residues 39–63 (IFLPTIYSIIFLTGIVGNGLVILVM). Topologically, residues 64-77 (GYQKKLRSMTDKYR) are cytoplasmic. Residues 78 to 99 (LHLSVADLLFVITLPFWAVDAV) form a helical membrane-spanning segment. Residues 94-97 (WAVD) form a chemokine binding region. At 100 to 110 (ANWYFGKFLCK) the chain is on the extracellular side. The chain crosses the membrane as a helical span at residues 111–130 (AVHVIYTVNLYSSVLILAFI). Residues 113-117 (HVIYT) form a chemokine binding region. Residues 131 to 154 (SLDRYLAIVHATNSQRPRKLLAEK) are Cytoplasmic-facing. Residues 133–135 (DRY) carry the Important for signaling motif. The segment at 135 to 147 (YLAIVHATNSQRP) is involved in dimerization; when bound to chemokine. A helical membrane pass occupies residues 155–174 (VVYVGVWIPALLLTIPDFIF). Residues 175–195 (ANVSEADDRYICDRFYPNDLW) are Extracellular-facing. The segment at 186–190 (CDRFY) is chemokine binding, important for signaling. The tract at residues 191-210 (PNDLWVVVFQFQHIMVGLIL) is involved in dimerization. A helical membrane pass occupies residues 196–216 (VVVFQFQHIMVGLILPGIVIL). Residues 217 to 241 (SCYCIIISKLSHSKGHQKRKALKTT) are Cytoplasmic-facing. A helical transmembrane segment spans residues 242–261 (VILILAFFACWLPYYIGISI). Over 262–282 (DSFILLEIIRQGCEFENTVHK) the chain is Extracellular. The involved in dimerization stretch occupies residues 266–268 (LLE). Residues 283–302 (WISITEALAFFHCCLNPILY) traverse the membrane as a helical segment. The Cytoplasmic segment spans residues 303-352 (AFLGAKFKTSAQHALTSVSRGSSLKILSKGKRGGHSSVSTESESSSFHSS). Phosphoserine occurs at positions 319 and 321. Serine 324 and serine 325 each carry phosphoserine; by PKC and GRK6. Positions 329–352 (LSKGKRGGHSSVSTESESSSFHSS) are disordered. Phosphoserine; by GRK6 is present on serine 330. Lysine 331 is covalently cross-linked (Glycyl lysine isopeptide (Lys-Gly) (interchain with G-Cter in ubiquitin)). Positions 337 to 352 (HSSVSTESESSSFHSS) are enriched in low complexity. Serine 339 bears the Phosphoserine; by GRK6 mark. 2 positions are modified to phosphoserine: serine 348 and serine 351.

Belongs to the G-protein coupled receptor 1 family. As to quaternary structure, monomer. Can form homodimers. Interacts with CD164. Interacts with ARRB2; the interaction is dependent on the C-terminal phosphorylation of CXCR4 and allows activation of MAPK1 and MAPK3. Interacts with ARR3; the interaction is dependent on the C-terminal phosphorylation of CXCR4 and modulates calcium mobilization. Interacts with RNF113A; the interaction, enhanced by CXCL12, promotes CXCR4 ubiquitination and subsequent degradation. Interacts (via the cytoplasmic C-terminal) with ITCH (via the WW domains I and II); the interaction, enhanced by CXCL12, promotes CXCR4 ubiquitination and leads to its degradation. Interacts with extracellular ubiquitin. Interacts with DBN1; this interaction is enhanced by antigenic stimulation. Following LPS binding, may form a complex with GDF5, HSP90AA1 and HSPA8. Post-translationally, phosphorylated on agonist stimulation. Rapidly phosphorylated on serine and threonine residues in the C-terminal. Phosphorylation at Ser-324 and Ser-325 leads to recruitment of ITCH, ubiquitination and protein degradation. In terms of processing, ubiquitinated after ligand binding, leading to its degradation. Ubiquitinated by ITCH at the cell membrane on agonist stimulation. The ubiquitin-dependent mechanism, endosomal sorting complex required for transport (ESCRT), then targets CXCR4 for lysosomal degradation. This process is dependent also on prior Ser-/Thr-phosphorylation in the C-terminal of CXCR4. Also binding of ARRB1 to STAM negatively regulates CXCR4 sorting to lysosomes though modulating ubiquitination of SFR5S. Sulfation is required for efficient binding of CXCL12/SDF-1alpha and promotes its dimerization. Post-translationally, O- and N-glycosylated. N-glycosylation can mask coreceptor function. The O-glycosylation chondroitin sulfate attachment does not affect interaction with CXCL12/SDF-1alpha nor its coreceptor activity.

It localises to the cell membrane. The protein resides in the cell junction. Its subcellular location is the early endosome. It is found in the late endosome. The protein localises to the lysosome. Receptor for the C-X-C chemokine CXCL12/SDF-1 that transduces a signal by increasing intracellular calcium ion levels and enhancing MAPK1/MAPK3 activation. Involved in the AKT signaling cascade. Plays a role in regulation of cell migration, e.g. during wound healing. Acts as a receptor for extracellular ubiquitin; leading to enhanced intracellular calcium ions and reduced cellular cAMP levels. Binds bacterial lipopolysaccharide (LPS) et mediates LPS-induced inflammatory response, including TNF secretion by monocytes. Involved in hematopoiesis and in cardiac ventricular septum formation. Also plays an essential role in vascularization of the gastrointestinal tract, probably by regulating vascular branching and/or remodeling processes in endothelial cells. Involved in cerebellar development. In the CNS, could mediate hippocampal-neuron survival. This Callithrix jacchus (White-tufted-ear marmoset) protein is C-X-C chemokine receptor type 4 (CXCR4).